The chain runs to 191 residues: Guanylate kinase (191 aa).

A Guanylate kinase-like domain is found at 4–182 (GRLIVVSGPS…AREEMIEIMR (179 aa)). 11–18 (GPSGAGKS) serves as a coordination point for ATP.

Belongs to the guanylate kinase family.

The protein resides in the cytoplasm. It catalyses the reaction GMP + ATP = GDP + ADP. Functionally, essential for recycling GMP and indirectly, cGMP. This is Guanylate kinase from Rubrobacter xylanophilus (strain DSM 9941 / JCM 11954 / NBRC 16129 / PRD-1).